We begin with the raw amino-acid sequence, 148 residues long: UPF0251 protein Cbei_2962 (148 aa).

Belongs to the UPF0251 family.

The chain is UPF0251 protein Cbei_2962 from Clostridium beijerinckii (strain ATCC 51743 / NCIMB 8052) (Clostridium acetobutylicum).